Here is a 166-residue protein sequence, read N- to C-terminus: Disulfide bond formation protein B (166 aa).

At methionine 1–leucine 11 the chain is on the cytoplasmic side. A helical membrane pass occupies residues phenylalanine 12 to tyrosine 28. Residues leucine 29 to tyrosine 46 lie on the Periplasmic side of the membrane. Cysteine 38 and cysteine 41 are oxidised to a cystine. Residues alanine 47–proline 63 form a helical membrane-spanning segment. Topologically, residues arginine 64 to valine 70 are cytoplasmic. A helical membrane pass occupies residues tyrosine 71–alanine 87. Residues arginine 88 to asparagine 143 are Periplasmic-facing. A disulfide bridge links cysteine 102 with cysteine 129. Residues tryptophan 144–glycine 162 traverse the membrane as a helical segment. Residues arginine 163 to arginine 166 are Cytoplasmic-facing.

It belongs to the DsbB family.

It is found in the cell inner membrane. Functionally, required for disulfide bond formation in some periplasmic proteins. Acts by oxidizing the DsbA protein. The sequence is that of Disulfide bond formation protein B from Azoarcus sp. (strain BH72).